The following is a 354-amino-acid chain: Protein RecA (354 aa).

An ATP-binding site is contributed by 67 to 74; that stretch reads GPESSGKT.

The protein belongs to the RecA family.

The protein resides in the cytoplasm. Functionally, can catalyze the hydrolysis of ATP in the presence of single-stranded DNA, the ATP-dependent uptake of single-stranded DNA by duplex DNA, and the ATP-dependent hybridization of homologous single-stranded DNAs. It interacts with LexA causing its activation and leading to its autocatalytic cleavage. This Chlamydia muridarum (strain MoPn / Nigg) protein is Protein RecA.